We begin with the raw amino-acid sequence, 393 residues long: Chorismate synthase (393 aa).

The NADP(+) site is built by arginine 40 and arginine 46. FMN is bound by residues 129-131 (RSS), 249-250 (QA), glycine 301, 316-320 (KPIPT), and arginine 342.

The protein belongs to the chorismate synthase family. Homotetramer. Requires FMNH2 as cofactor.

The enzyme catalyses 5-O-(1-carboxyvinyl)-3-phosphoshikimate = chorismate + phosphate. It participates in metabolic intermediate biosynthesis; chorismate biosynthesis; chorismate from D-erythrose 4-phosphate and phosphoenolpyruvate: step 7/7. Catalyzes the anti-1,4-elimination of the C-3 phosphate and the C-6 proR hydrogen from 5-enolpyruvylshikimate-3-phosphate (EPSP) to yield chorismate, which is the branch point compound that serves as the starting substrate for the three terminal pathways of aromatic amino acid biosynthesis. This reaction introduces a second double bond into the aromatic ring system. This is Chorismate synthase from Pelobacter propionicus (strain DSM 2379 / NBRC 103807 / OttBd1).